The following is a 304-amino-acid chain: 4-diphosphocytidyl-2-C-methyl-D-erythritol kinase (304 aa).

The active site involves K18. 103-113 (PVAAGIGGGSA) is an ATP binding site. D145 is an active-site residue.

This sequence belongs to the GHMP kinase family. IspE subfamily.

The catalysed reaction is 4-CDP-2-C-methyl-D-erythritol + ATP = 4-CDP-2-C-methyl-D-erythritol 2-phosphate + ADP + H(+). It functions in the pathway isoprenoid biosynthesis; isopentenyl diphosphate biosynthesis via DXP pathway; isopentenyl diphosphate from 1-deoxy-D-xylulose 5-phosphate: step 3/6. Functionally, catalyzes the phosphorylation of the position 2 hydroxy group of 4-diphosphocytidyl-2C-methyl-D-erythritol. This Rhodospirillum rubrum (strain ATCC 11170 / ATH 1.1.1 / DSM 467 / LMG 4362 / NCIMB 8255 / S1) protein is 4-diphosphocytidyl-2-C-methyl-D-erythritol kinase.